Consider the following 38-residue polypeptide: AVTDNEIVPQCLANGSKCYSHDVCCTKRCHNYAKKCVT.

Disulfide bonds link C11-C25, C18-C29, and C24-C36. Y32 is modified (3',4'-dihydroxyphenylalanine).

As to quaternary structure, monomer. Post-translationally, contains L-DOPA (3',4'-dihydroxyphenylalanine).

The protein localises to the secreted. Potent reversible, competitive inhibitor of tyrosinase (phenol oxidase) in the nanomolar range. In Musca domestica (House fly), this protein is Tyrosinase inhibitor.